The chain runs to 373 residues: GTPase Obg (373 aa).

One can recognise an Obg domain in the interval 1–158; it reads MFVDSVELLI…KQVRLEMKLI (158 aa). Residues 62 to 83 form a disordered region; that stretch reads NHIKAENGRPGEGRKKYGRKGQ. Basic and acidic residues predominate over residues 64 to 76; it reads IKAENGRPGEGRK. An OBG-type G domain is found at 159-362; the sequence is ADVGLVGYPN…LRYALGDFVK (204 aa). GTP contacts are provided by residues 165–172, 190–194, 212–215, 280–283, and 343–345; these read GYPNVGKS, FTTLT, DIPG, TKID, and SSV. Positions 172 and 192 each coordinate Mg(2+).

It belongs to the TRAFAC class OBG-HflX-like GTPase superfamily. OBG GTPase family. In terms of assembly, monomer. It depends on Mg(2+) as a cofactor.

The protein localises to the cytoplasm. In terms of biological role, an essential GTPase which binds GTP, GDP and possibly (p)ppGpp with moderate affinity, with high nucleotide exchange rates and a fairly low GTP hydrolysis rate. Plays a role in control of the cell cycle, stress response, ribosome biogenesis and in those bacteria that undergo differentiation, in morphogenesis control. The polypeptide is GTPase Obg (Sulfurovum sp. (strain NBC37-1)).